Consider the following 376-residue polypeptide: Lipoyl synthase 2, mitochondrial (376 aa).

Positions 109, 114, 120, 140, 144, 147, and 356 each coordinate [4Fe-4S] cluster. The 221-residue stretch at 125 to 345 (ETGTATATIM…QTLGMEMGFR (221 aa)) folds into the Radical SAM core domain.

The protein belongs to the radical SAM superfamily. Lipoyl synthase family. [4Fe-4S] cluster is required as a cofactor.

It is found in the mitochondrion. It catalyses the reaction [[Fe-S] cluster scaffold protein carrying a second [4Fe-4S](2+) cluster] + N(6)-octanoyl-L-lysyl-[protein] + 2 oxidized [2Fe-2S]-[ferredoxin] + 2 S-adenosyl-L-methionine + 4 H(+) = [[Fe-S] cluster scaffold protein] + N(6)-[(R)-dihydrolipoyl]-L-lysyl-[protein] + 4 Fe(3+) + 2 hydrogen sulfide + 2 5'-deoxyadenosine + 2 L-methionine + 2 reduced [2Fe-2S]-[ferredoxin]. Its pathway is protein modification; protein lipoylation via endogenous pathway; protein N(6)-(lipoyl)lysine from octanoyl-[acyl-carrier-protein]: step 2/2. Its function is as follows. Catalyzes the radical-mediated insertion of two sulfur atoms into the C-6 and C-8 positions of the octanoyl moiety bound to the lipoyl domains of lipoate-dependent enzymes, thereby converting the octanoylated domains into lipoylated derivatives. The polypeptide is Lipoyl synthase 2, mitochondrial (Pisum sativum (Garden pea)).